Here is a 422-residue protein sequence, read N- to C-terminus: Immunoglobulin mu Fc receptor (422 aa).

Positions 1–16 (MDFWLWLLYFLPVSGA) are cleaved as a signal peptide. Residues 18–262 (RVLPEVQLNV…DRGLHIPIPE (245 aa)) lie on the Extracellular side of the membrane. The 98-residue stretch at 24–121 (QLNVEWGGSI…GKTQKITLNV (98 aa)) folds into the Ig-like domain. 2 disulfide bridges follow: Cys37-Cys103 and Cys49-Cys58. A Phosphothreonine modification is found at Thr91. A helical membrane pass occupies residues 263-283 (FHILIPTFLGFLLLVLLGLVV). Residues 284–422 (KRAIQRRRAS…YAPGPRSSCP (139 aa)) are Cytoplasmic-facing. Basic residues predominate over residues 290 to 308 (RRASSRRAGRLAMRRRGRG). Disordered regions lie at residues 290-367 (RRAS…QVLE) and 391-422 (VNLE…SSCP). The segment covering 344 to 363 (LGPAEAPLLNAPASASPASP) has biased composition (low complexity).

As to quaternary structure, interacts (via Ig-like domain) with IGHM (via CH4/Cmu4 domain), both secreted and membrane-bound IgM; the interaction is glycan-independent and multivalent theoretically involving up to eight binding sites for the IgM pentamer. In terms of processing, phosphorylated on both Tyr and Ser residues. Post-translationally, O-glycosylated. Sialylated. O-linked glycans regulate trafficking to the plasma membrane. Expressed in pre-B cells, immature and mature B cells residing in primary and secondary lymphoid organs (at protein level). In the spleen, highly expressed in follicular and marginal zone B cells and at lower levels in germinal center B cells and plasma cells. Expressed in splenic dendritic cells and in granulocytes. In the peritoneum, expressed in B1-a and B-2 cell lineages. In the bone marrow, expressed in immature B cells and at a lower level in pro- and pre-B cells (at protein level). Expressed in M cells (at protein level).

Its subcellular location is the cell membrane. The protein resides in the early endosome membrane. It localises to the golgi apparatus. The protein localises to the trans-Golgi network membrane. It is found in the lysosome membrane. High-affinity Fc receptor for immunoglobulin M (IgM), both secreted and membrane-bound IgM. Primarily regulates IgM transport and homeostasis. In lymphoid cells, enables exocytosis of membrane-bound IgM on the plasma membrane as well as endocytosis of IgM-antigen complexes toward lysosomes for degradation. In mucosal epithelium, mediates retrotranscytosis of antigen-IgM complexes across mucosal M cells toward antigen-presenting cells in mucosal lymphoid tissues. Triggers costimulatory signaling and mediates most of IgM effector functions involved in B cell development and primary immune response to infection. Likely limits tonic IgM BCR signaling to self-antigens for proper negative selection of autoreactive B cells in the bone marrow and for the maintenance of regulatory B cell pool in peripheral lymphoid organs. Mediates antibody responses to T cell-dependent and T cell-independent antigens and promotes induction of an efficient neutralizing IgG response. Engages in cross-talk with antigen-receptor signaling via the non-canonical NF-kappa-B, MAP kinases and calcium signaling pathways. This is Immunoglobulin mu Fc receptor from Mus musculus (Mouse).